Here is a 561-residue protein sequence, read N- to C-terminus: Putative cuticle collagen 145 (561 aa).

The N-terminal stretch at Met1–Thr30 is a signal peptide. Over residues Thr100 to Pro112 the composition is skewed to pro residues. Disordered stretches follow at residues Thr100–Pro134, Pro148–Pro271, Thr367–Thr398, and Thr422–Leu540. 2 triple-helical region regions span residues Pro102–Asp127 and Gly153–Asn276. Composition is skewed to low complexity over residues Ala164 to Asp209 and Ala219 to Pro265. Residues Thr367–Pro379 are compositionally biased toward pro residues. A triple-helical region region spans residues Lys413–Asp544. Low complexity-rich tracts occupy residues Thr422–Asp467 and Ala486–Pro532. Residues Gly485 to Asn543 form the Collagen-like domain.

It belongs to the cuticular collagen family. As to quaternary structure, collagen polypeptide chains are complexed within the cuticle by disulfide bonds and other types of covalent cross-links.

In terms of biological role, nematode cuticles are composed largely of collagen-like proteins. The cuticle functions both as an exoskeleton and as a barrier to protect the worm from its environment. This chain is Putative cuticle collagen 145, found in Caenorhabditis briggsae.